The sequence spans 146 residues: 3-hydroxyacyl-[acyl-carrier-protein] dehydratase FabZ (146 aa).

The active site involves histidine 49.

This sequence belongs to the thioester dehydratase family. FabZ subfamily.

It localises to the cytoplasm. The enzyme catalyses a (3R)-hydroxyacyl-[ACP] = a (2E)-enoyl-[ACP] + H2O. Its function is as follows. Involved in unsaturated fatty acids biosynthesis. Catalyzes the dehydration of short chain beta-hydroxyacyl-ACPs and long chain saturated and unsaturated beta-hydroxyacyl-ACPs. This chain is 3-hydroxyacyl-[acyl-carrier-protein] dehydratase FabZ, found in Azotobacter vinelandii (strain DJ / ATCC BAA-1303).